Here is a 404-residue protein sequence, read N- to C-terminus: Dihydrolipoyllysine-residue acetyltransferase component of pyruvate dehydrogenase complex (404 aa).

The Lipoyl-binding domain maps to 2–78 (PIKILMPALS…PVNSLIAVLS (77 aa)). Lys-43 carries the post-translational modification N6-lipoyllysine. In terms of domain architecture, Peripheral subunit-binding (PSBD) spans 128–165 (FASPLAKRLAKIRNIRLESVQGSGPHGRIVKQDILSYS). His-377 is a catalytic residue.

This sequence belongs to the 2-oxoacid dehydrogenase family. Forms a 24-polypeptide structural core with octahedral symmetry. Requires (R)-lipoate as cofactor.

The catalysed reaction is N(6)-[(R)-dihydrolipoyl]-L-lysyl-[protein] + acetyl-CoA = N(6)-[(R)-S(8)-acetyldihydrolipoyl]-L-lysyl-[protein] + CoA. The pyruvate dehydrogenase complex catalyzes the overall conversion of pyruvate to acetyl-CoA and CO(2). It contains multiple copies of three enzymatic components: pyruvate dehydrogenase (E1), dihydrolipoamide acetyltransferase (E2) and lipoamide dehydrogenase (E3). The chain is Dihydrolipoyllysine-residue acetyltransferase component of pyruvate dehydrogenase complex (pdhC) from Rickettsia typhi (strain ATCC VR-144 / Wilmington).